Reading from the N-terminus, the 99-residue chain is Acylphosphatase-2 (99 aa).

Serine 2 carries the post-translational modification N-acetylserine. The Acylphosphatase-like domain occupies 9–99 (SVDYEVFGRV…LEYSNFSIRY (91 aa)). Active-site residues include arginine 24 and asparagine 42. Phosphoserine is present on serine 93.

Belongs to the acylphosphatase family.

It carries out the reaction an acyl phosphate + H2O = a carboxylate + phosphate + H(+). Its function is as follows. Its physiological role is not yet clear. This is Acylphosphatase-2 (ACYP2) from Cavia porcellus (Guinea pig).